Here is a 407-residue protein sequence, read N- to C-terminus: Geranylgeranyl diphosphate reductase (407 aa).

It belongs to the geranylgeranyl reductase family. ChlP subfamily.

It catalyses the reaction phytyl diphosphate + 3 NADP(+) = geranylgeranyl diphosphate + 3 NADPH + 3 H(+). It functions in the pathway porphyrin-containing compound metabolism; chlorophyll biosynthesis. In terms of biological role, catalyzes the stepwise hydrogenation of geranylgeraniol to phytol during chlorophyll A (ChlA) biosynthesis. The chain is Geranylgeranyl diphosphate reductase (chlP) from Synechocystis sp. (strain ATCC 27184 / PCC 6803 / Kazusa).